Reading from the N-terminus, the 430-residue chain is Glutamate-1-semialdehyde 2,1-aminomutase (430 aa).

At lysine 265 the chain carries N6-(pyridoxal phosphate)lysine.

It belongs to the class-III pyridoxal-phosphate-dependent aminotransferase family. HemL subfamily. Homodimer. The cofactor is pyridoxal 5'-phosphate.

Its subcellular location is the cytoplasm. It carries out the reaction (S)-4-amino-5-oxopentanoate = 5-aminolevulinate. It participates in porphyrin-containing compound metabolism; protoporphyrin-IX biosynthesis; 5-aminolevulinate from L-glutamyl-tRNA(Glu): step 2/2. This chain is Glutamate-1-semialdehyde 2,1-aminomutase, found in Shewanella sp. (strain MR-4).